Here is a 189-residue protein sequence, read N- to C-terminus: Apolipoprotein D (189 aa).

The signal sequence occupies residues 1–20 (MVMLLLLLSALAGLFGAAEG). A Pyrrolidone carboxylic acid modification is found at Gln-21. 2 disulfides stabilise this stretch: Cys-28–Cys-134 and Cys-61–Cys-185. Asn-65 and Asn-98 each carry an N-linked (GlcNAc...) (complex) asparagine glycan.

Belongs to the calycin superfamily. Lipocalin family. In terms of assembly, homodimer. In plasma, also exists as a disulfide-linked heterodimer with APOA2. Post-translationally, N-glycosylated. N-glycan heterogeneity at Asn-65: Hex5HexNAc4 (major) and Hex6HexNAc5 (minor); at Asn-98: Hex5HexNAc4 (minor), dHex1Hex5HexNAc4 (major), dHex1Hex6HexNAc5 (minor) and dHex1Hex7HexNAc6 (minor). In terms of tissue distribution, expressed in liver, intestine, pancreas, kidney, placenta, adrenal, spleen, fetal brain tissue and tears.

Its subcellular location is the secreted. In terms of biological role, APOD occurs in the macromolecular complex with lecithin-cholesterol acyltransferase. It is probably involved in the transport and binding of bilin. Appears to be able to transport a variety of ligands in a number of different contexts. The chain is Apolipoprotein D (APOD) from Homo sapiens (Human).